A 717-amino-acid chain; its full sequence is Protein Teyrha-meyrha (717 aa).

Residues 140–152 (FRTDSASPTCTSH) are compositionally biased toward polar residues. 6 disordered regions span residues 140 to 214 (FRTD…SNPA), 229 to 270 (HLAA…APPV), 440 to 498 (KIPP…QPGK), 511 to 539 (SQKD…GEAP), 563 to 594 (DSCG…MDTA), and 624 to 717 (QRRQ…DTKA). Over residues 195–214 (ATSSSASSSSSSSCSTSNPA) the composition is skewed to low complexity. Basic residues predominate over residues 235-263 (PHHHPHTHAHSHPHPLAHPHAHSHHHVGH). A compositionally biased stretch (basic and acidic residues) spans 442–451 (PPEDDAKSQE). Over residues 452–466 (EIETVDVESCNDEVP) the composition is skewed to acidic residues. Positions 471–482 (ELATPSSGSSGT) are enriched in polar residues. Basic and acidic residues predominate over residues 513 to 522 (KDPHPDEHDV). Low complexity-rich tracts occupy residues 523-533 (STNVTTASSSS) and 570-580 (NDTNSSSSTHN). The span at 630–640 (QNVGSSRSLEN) shows a compositional bias: polar residues. Over residues 667–686 (NNNNNNNNNNNNSNSNNNNN) the composition is skewed to low complexity. Residues 687-704 (PSTKYAESMENSLSQLSS) are compositionally biased toward polar residues.

In embryos, expressed specifically in M12 (at protein level).

It localises to the nucleus. Required for the correct synaptic targeting of motoneurons RP5 and V to muscle 12 (M12). May be involved in the negative regulation of Tl in M12. Involved in the correct patterning of veins in the proximal (costal) region of the wing blade. This Drosophila melanogaster (Fruit fly) protein is Protein Teyrha-meyrha.